The chain runs to 58 residues: Single-pass membrane and coiled-coil domain-containing protein 4 homolog (58 aa).

The stretch at 1–31 (MRQLKGKVKETRKQKKERKLDNLETQAKIRT) forms a coiled coil. Residues 31–51 (TVVLPALGVLAVFLVLFVYLK) form a helical membrane-spanning segment.

It belongs to the SMCO4 family.

The protein resides in the membrane. This Drosophila melanogaster (Fruit fly) protein is Single-pass membrane and coiled-coil domain-containing protein 4 homolog.